The primary structure comprises 394 residues: MWTNTFKWCSKTEKETTTADAKVCASVQGLKALQQQIMDSTTVRGSVNNTMTPGGINQWHFHNKRANKVCTPTVLIHGYAASSMAFYRTFENLSDNIKDLYAIDLPANGASEAPALQVNKTKKIKSLRFKHIEDDVVIPVIEKRPPAEDIKSHLEQYESYFVDRIEQWRKDNKLRKINVVGHSFGGYISFKYALKYPDSIEKLCLISPLGVENSIHAITHKWEPNTTYPLTFTDPSSRYYTRKLNVPRFIFENQLNVLKWMGPIGSKLCSNYISTAYVKVPDQIYKDYLLHSFVGKNQTVQPQTIKVFTHLFERNLIARDPIINNVRFLNPATPVMFMYGEHDWMDKYAGYLTTESMLKNKAKASYVEVPDAGHNLFLDNPQHFASSLVSFLSK.

The 308-residue stretch at 74 to 381 (VLIHGYAASS…AGHNLFLDNP (308 aa)) folds into the AB hydrolase-1 domain. The HXXXXD motif signature appears at 374-379 (HNLFLD).

It belongs to the peptidase S33 family. ABHD4/ABHD5 subfamily.

The catalysed reaction is a 1-acyl-sn-glycero-3-phosphate + an acyl-CoA = a 1,2-diacyl-sn-glycero-3-phosphate + CoA. In terms of biological role, lysophosphatidic acid acyltransferase involved in membrane remodeling leading to increased organic solvent tolerance. Involved in resistance to azoles and copper. The protein is 1-acylglycerol-3-phosphate O-acyltransferase ICT1 (ICT1) of Saccharomyces cerevisiae (strain ATCC 204508 / S288c) (Baker's yeast).